The chain runs to 134 residues: Ribosome-binding factor A (134 aa).

Belongs to the RbfA family. As to quaternary structure, monomer. Binds 30S ribosomal subunits, but not 50S ribosomal subunits or 70S ribosomes.

Its subcellular location is the cytoplasm. Functionally, one of several proteins that assist in the late maturation steps of the functional core of the 30S ribosomal subunit. Associates with free 30S ribosomal subunits (but not with 30S subunits that are part of 70S ribosomes or polysomes). Required for efficient processing of 16S rRNA. May interact with the 5'-terminal helix region of 16S rRNA. This is Ribosome-binding factor A from Tolumonas auensis (strain DSM 9187 / NBRC 110442 / TA 4).